We begin with the raw amino-acid sequence, 472 residues long: Alanine--anticapsin ligase (472 aa).

E109 serves as a coordination point for Mg(2+). Residues K138 and K178 each coordinate ATP. Residues 142 to 355 (RAAFNRAGVK…MAQLLLDVLC (214 aa)) enclose the ATP-grasp domain. L182 lines the Mg(2+) pocket. ATP contacts are provided by residues 184–185 (SS), 226–229 (EEFL), and Q268. Residues E273 and 309–311 (HTE) each bind substrate. Residues E311 and E324 each coordinate Mg(2+). Residue 328–331 (RFAG) participates in substrate binding.

Monomer or homodimer. It depends on Mg(2+) as a cofactor.

It carries out the reaction L-anticapsin + L-alanine + ATP = bacilysin + ADP + phosphate + H(+). It participates in antibiotic biosynthesis; bacilysin biosynthesis. In terms of biological role, part of the bacABCDEFG operon responsible for the biosynthesis of bacilysin, an irreversible inactivator of the glutaminase domain of glucosamine synthetase. Catalyzes the formation of alpha-dipeptides from various L-amino acids in the presence of ATP. In vivo catalyzes the ligation of L-alanine and L-anticapsin (epoxycyclohexanonyl-Ala) to produce the final bacilysin antibiotic (L-Ala-L-4S-cyclohexenonyl-Ala dipeptide). The sequence is that of Alanine--anticapsin ligase from Bacillus subtilis.